The following is a 487-amino-acid chain: Malonate-semialdehyde dehydrogenase (487 aa).

Residues A150, F152, K176, E179, R180, S229, and T251 each coordinate NAD(+). C284 serves as the catalytic Nucleophile. NAD(+) is bound at residue E382.

This sequence belongs to the aldehyde dehydrogenase family. IolA subfamily. Homotetramer.

It catalyses the reaction 3-oxopropanoate + NAD(+) + CoA + H2O = hydrogencarbonate + acetyl-CoA + NADH + H(+). It carries out the reaction 2-methyl-3-oxopropanoate + NAD(+) + CoA + H2O = propanoyl-CoA + hydrogencarbonate + NADH + H(+). The protein operates within polyol metabolism; myo-inositol degradation into acetyl-CoA; acetyl-CoA from myo-inositol: step 7/7. Functionally, catalyzes the oxidation of malonate semialdehyde (MSA) and methylmalonate semialdehyde (MMSA) into acetyl-CoA and propanoyl-CoA, respectively. Is involved in a myo-inositol catabolic pathway. Bicarbonate, and not CO2, is the end-product of the enzymatic reaction. The chain is Malonate-semialdehyde dehydrogenase from Bacillus subtilis subsp. natto.